The following is a 323-amino-acid chain: Fructose-bisphosphate aldolase (323 aa).

Beta-D-fructose 1,6-bisphosphate is bound at residue serine 50. Aspartate 83 (proton donor) is an active-site residue. Histidine 84 and histidine 178 together coordinate Zn(2+). Beta-D-fructose 1,6-bisphosphate contacts are provided by histidine 178, glycine 179, and lysine 182. Zn(2+) is bound at residue histidine 210. Residues glycine 211, serine 213, asparagine 253, aspartate 255, serine 256, arginine 259, and arginine 280 each contribute to the beta-D-fructose 1,6-bisphosphate site.

This sequence belongs to the class II fructose-bisphosphate aldolase family. As to quaternary structure, homodimer. Zn(2+) is required as a cofactor.

It catalyses the reaction beta-D-fructose 1,6-bisphosphate = D-glyceraldehyde 3-phosphate + dihydroxyacetone phosphate. The protein operates within carbohydrate degradation; glycolysis; D-glyceraldehyde 3-phosphate and glycerone phosphate from D-glucose: step 4/4. Its function is as follows. Plays a key role in glycolysis by catalyzing the cleavage of fructose 1,6-bisphosphate into dihydroxyacetone phosphate and glyceraldehyde 3-phosphate. Does not cleave D-tagatose-1,6-bisphosphate. In Giardia intestinalis (strain ATCC 50803 / WB clone C6) (Giardia lamblia), this protein is Fructose-bisphosphate aldolase.